Here is a 164-residue protein sequence, read N- to C-terminus: C-phycoerythrin alpha chain (164 aa).

2 residues coordinate (2R,3E)-phycoerythrobilin: Cys-82 and Cys-139.

It belongs to the phycobiliprotein family. In terms of assembly, heterodimer of an alpha and a beta chain. In terms of processing, contains two covalently linked bilin chromophores.

The protein resides in the cellular thylakoid membrane. Functionally, light-harvesting photosynthetic bile pigment-protein from the phycobiliprotein complex. The chain is C-phycoerythrin alpha chain (cpeA) from Microchaete diplosiphon (Fremyella diplosiphon).